The sequence spans 103 residues: KRSLRDLGIPVNQIIPEGGSLKDLKDLPRAWFNIVPYREVGLMTATFLEKEYGMPYVSVTPMGILDTAEFISQVEKLVNAWASVLSEERVNYMLYIQNQTRFV.

This sequence belongs to the ChlB/BchB/BchZ family. Protochlorophyllide reductase is composed of three subunits; ChlL, ChlN and ChlB. Forms a heterotetramer of two ChlB and two ChlN subunits. Requires [4Fe-4S] cluster as cofactor.

Its subcellular location is the plastid. It is found in the chloroplast. It carries out the reaction chlorophyllide a + oxidized 2[4Fe-4S]-[ferredoxin] + 2 ADP + 2 phosphate = protochlorophyllide a + reduced 2[4Fe-4S]-[ferredoxin] + 2 ATP + 2 H2O. It participates in porphyrin-containing compound metabolism; chlorophyll biosynthesis (light-independent). Component of the dark-operative protochlorophyllide reductase (DPOR) that uses Mg-ATP and reduced ferredoxin to reduce ring D of protochlorophyllide (Pchlide) to form chlorophyllide a (Chlide). This reaction is light-independent. The NB-protein (ChlN-ChlB) is the catalytic component of the complex. The protein is Light-independent protochlorophyllide reductase subunit B (chlB) of Sphaeropteris cooperi (Australian tree fern).